The following is a 690-amino-acid chain: Glycine--tRNA ligase beta subunit (690 aa).

This sequence belongs to the class-II aminoacyl-tRNA synthetase family. Tetramer of two alpha and two beta subunits.

The protein localises to the cytoplasm. The catalysed reaction is tRNA(Gly) + glycine + ATP = glycyl-tRNA(Gly) + AMP + diphosphate. In Desulfitobacterium hafniense (strain Y51), this protein is Glycine--tRNA ligase beta subunit.